Consider the following 482-residue polypeptide: MAASCVALLVLALLLLVLLLGLWKRGRQTGRARHMVVVVLGDVGRSPRMQYHALSLAQSGFSVTLLGFYNSKPRDELLQNDRIRIVKLTDLRGLGAGPRILQYGVKVVFQAVYLLWKMMRMDPAAYIFLQNPPGLPAIAVCWFVGCICGSKLVIDWHNYGYSIMGLVHGPRHPIVLLAKWYEKFFGRLSHLNLCVTNAMREDLAENWCVRAVTLYDKPASFFKETPLDLQHELFMKLSHTYSPFQSCSDPSHPDTERSAFTERDCQSGVVRRLHGRPALLVSSTSWTEDEDFSILLRALEKFEQQALTGDSLPSLVCVITGKGPLREHYRHLISQKHLQHVRFCTPWLEAEDYPLLLGSADLGVCLHMSSSGLDLPMKVVDMFGCHLPVCAVNFKCLHELVRHGENGLVFKDAEELAAQLQMLFSKFPDPAGKLSQFRKKLQESGQQRWDESWQHTVLPLLAHSQMTPRPHPPCGHPSCRGF.

Residues 1-2 (MA) lie on the Lumenal side of the membrane. A helical transmembrane segment spans residues 3–23 (ASCVALLVLALLLLVLLLGLW). Topologically, residues 24 to 99 (KRGRQTGRAR…DLRGLGAGPR (76 aa)) are cytoplasmic. An intramembrane region (helical) is located at residues 100-120 (ILQYGVKVVFQAVYLLWKMMR). The Cytoplasmic portion of the chain corresponds to 121 to 482 (MDPAAYIFLQ…PCGHPSCRGF (362 aa)). The residue at position 242 (Ser242) is a Phosphoserine.

It belongs to the glycosyltransferase group 1 family. Glycosyltransferase 33 subfamily.

The protein localises to the endoplasmic reticulum membrane. The enzyme catalyses an N,N'-diacetylchitobiosyl-diphospho-di-trans,poly-cis-dolichol + GDP-alpha-D-mannose = a beta-D-Man-(1-&gt;4)-beta-D-GlcNAc-(1-&gt;4)-alpha-D-GlcNAc-diphospho-di-trans,poly-cis-dolichol + GDP + H(+). The protein operates within protein modification; protein glycosylation. Its function is as follows. Mannosyltransferase that operates in the biosynthetic pathway of dolichol-linked oligosaccharides, the glycan precursors employed in protein asparagine (N)-glycosylation. The assembly of dolichol-linked oligosaccharides begins on the cytosolic side of the endoplasmic reticulum membrane and finishes in its lumen. The sequential addition of sugars to dolichol pyrophosphate produces dolichol-linked oligosaccharides containing fourteen sugars, including two GlcNAcs, nine mannoses and three glucoses. Once assembled, the oligosaccharide is transferred from the lipid to nascent proteins by oligosaccharyltransferases. Catalyzes, on the cytoplasmic face of the endoplasmic reticulum, the addition of the first mannose residues to the dolichol-linked oligosaccharide chain, to produce Man1GlcNAc(2)-PP-dolichol core oligosaccharide. Man1GlcNAc(2)-PP-dolichol is a substrate for ALG2, the following enzyme in the biosynthetic pathway. The sequence is that of Chitobiosyldiphosphodolichol beta-mannosyltransferase from Mus musculus (Mouse).